The sequence spans 631 residues: Dolichyl-diphosphooligosaccharide--protein glycosyltransferase subunit 2 (631 aa).

A signal peptide spans 1–22 (MALPGSSTVFLLALTIIASTQA). Over 23–540 (LTPTHYLTKH…REPEKRPPTV (518 aa)) the chain is Lumenal. A glycan (N-linked (GlcNAc...) asparagine) is linked at asparagine 106. Lysine 154 is covalently cross-linked (Glycyl lysine isopeptide (Lys-Gly) (interchain with G-Cter in ubiquitin)). The chain crosses the membrane as a helical span at residues 541 to 561 (VSNTFTALILSPLLLLFALWI). The Cytoplasmic portion of the chain corresponds to 562 to 571 (RIGANVSNFT). Residues 572 to 592 (FAPSTIVFHLGHAAMLGLMYV) form a helical membrane-spanning segment. At 593 to 596 (YWTQ) the chain is on the lumenal side. The chain crosses the membrane as a helical span at residues 597–617 (LNMFQTLKYLAILGSVTFLAG). The Cytoplasmic segment spans residues 618–631 (NRMLAQQAIKRTAH).

It belongs to the SWP1 family. In terms of assembly, component of the oligosaccharyltransferase (OST) complex. OST exists in two different complex forms which contain common core subunits RPN1, RPN2, OST48, OST4, DAD1 and TMEM258, either STT3A or STT3B as catalytic subunits, and form-specific accessory subunits. STT3A complex assembly occurs through the formation of 3 subcomplexes. Subcomplex 1 contains RPN1 and TMEM258, subcomplex 2 contains the STT3A-specific subunits STT3A, DC2/OSTC, and KCP2 as well as the core subunit OST4, and subcomplex 3 contains RPN2, DAD1, and OST48. The STT3A complex can form stable complexes with the Sec61 complex or with both the Sec61 and TRAP complexes. Interacts with DDI2. Interacts with TMEM35A/NACHO.

The protein localises to the endoplasmic reticulum. It localises to the endoplasmic reticulum membrane. It participates in protein modification; protein glycosylation. In terms of biological role, subunit of the oligosaccharyl transferase (OST) complex that catalyzes the initial transfer of a defined glycan (Glc(3)Man(9)GlcNAc(2) in eukaryotes) from the lipid carrier dolichol-pyrophosphate to an asparagine residue within an Asn-X-Ser/Thr consensus motif in nascent polypeptide chains, the first step in protein N-glycosylation. N-glycosylation occurs cotranslationally and the complex associates with the Sec61 complex at the channel-forming translocon complex that mediates protein translocation across the endoplasmic reticulum (ER). All subunits are required for a maximal enzyme activity. The sequence is that of Dolichyl-diphosphooligosaccharide--protein glycosyltransferase subunit 2 from Bos taurus (Bovine).